A 632-amino-acid chain; its full sequence is DNA polymerase eta (632 aa).

One can recognise a UmuC domain in the interval 26 to 309; it reads IAHIDMNAFF…FEITSFWTLG (284 aa). Mg(2+) is bound by residues D30 and D155. Residues 545-580 form a UBZ3-type zinc finger; it reads EKTPKLECCKYQVTFTDQKALQEHADYHLALKLSEG. Residues C552, C553, H568, and H572 each contribute to the Zn(2+) site. The interval 598–632 is disordered; it reads LLFSRKRPNSQHTATPQKKQVTSSKNILSFFTRKK. Residues 607 to 626 are compositionally biased toward polar residues; sequence SQHTATPQKKQVTSSKNILS. A POL30-binding region spans residues 625–632; sequence LSFFTRKK.

Belongs to the DNA polymerase type-Y family. Interacts with POL30. This interaction is essential for the polymerase eta function.

The protein localises to the nucleus. The catalysed reaction is DNA(n) + a 2'-deoxyribonucleoside 5'-triphosphate = DNA(n+1) + diphosphate. Its function is as follows. DNA polymerase specifically involved in DNA repair. Plays an important role in translesion synthesis, where the normal high fidelity DNA polymerases cannot proceed and DNA synthesis stalls. Plays an important role in the repair of UV-induced pyrimidine dimers. Depending on the context, it inserts the correct base, but causes frequent base transitions and transversions. Efficiently incorporates nucleotides opposite to other UV or oxidative DNA damages like O(6)-methylguanine, 7,8-dihydro-8-oxoguanine, 2,6-diamino-4-hydroxy-5-formamidopyrimidine of 2'-deoxyguanosine (FaPydG), or p-benzoquinone DNA adducts. The protein is DNA polymerase eta (RAD30) of Saccharomyces cerevisiae (strain ATCC 204508 / S288c) (Baker's yeast).